The following is a 432-amino-acid chain: Lecithin-cholesterol acyltransferase-like 1 (432 aa).

A helical transmembrane segment spans residues 7-29 (HYSVVIAILVVVTMTSMCQAVGS). Ser-209 functions as the Acyl-ester intermediate in the catalytic mechanism. Residues Asp-374 and His-400 each act as charge relay system in the active site.

Belongs to the AB hydrolase superfamily. Lipase family.

It is found in the membrane. This chain is Lecithin-cholesterol acyltransferase-like 1 (LCAT1), found in Arabidopsis thaliana (Mouse-ear cress).